The following is a 381-amino-acid chain: tRNA-specific 2-thiouridylase MnmA (381 aa).

ATP contacts are provided by residues 9–16 (GMSGGVDS) and M35. The interval 95-97 (NPD) is interaction with target base in tRNA. C100 functions as the Nucleophile in the catalytic mechanism. The cysteines at positions 100 and 196 are disulfide-linked. Residue G124 coordinates ATP. Residues 146-148 (KDQ) are interaction with tRNA. C196 functions as the Cysteine persulfide intermediate in the catalytic mechanism. Residues 308-309 (RY) form an interaction with tRNA region.

This sequence belongs to the MnmA/TRMU family.

It is found in the cytoplasm. The enzyme catalyses S-sulfanyl-L-cysteinyl-[protein] + uridine(34) in tRNA + AH2 + ATP = 2-thiouridine(34) in tRNA + L-cysteinyl-[protein] + A + AMP + diphosphate + H(+). Catalyzes the 2-thiolation of uridine at the wobble position (U34) of tRNA, leading to the formation of s(2)U34. The sequence is that of tRNA-specific 2-thiouridylase MnmA from Burkholderia multivorans (strain ATCC 17616 / 249).